Consider the following 199-residue polypeptide: Superoxide dismutase [Mn/Fe] 2 (199 aa).

Fe(3+) contacts are provided by His-27, His-81, Asp-161, and His-165. Residues His-27, His-81, Asp-161, and His-165 each coordinate Mn(2+).

The protein belongs to the iron/manganese superoxide dismutase family. In terms of assembly, homodimer. Can also form a heterodimer with SodA. It depends on Mn(2+) as a cofactor. Requires Fe(3+) as cofactor.

It catalyses the reaction 2 superoxide + 2 H(+) = H2O2 + O2. In terms of biological role, destroys superoxide anion radicals which are normally produced within the cells and which are toxic to biological systems. Catalyzes the dismutation of superoxide anion radicals into O2 and H2O2 by successive reduction and oxidation of the transition metal ion at the active site. The chain is Superoxide dismutase [Mn/Fe] 2 (sodM) from Staphylococcus aureus (strain bovine RF122 / ET3-1).